Reading from the N-terminus, the 112-residue chain is UPF0342 protein SUB0718 (112 aa).

This sequence belongs to the UPF0342 family.

In Streptococcus uberis (strain ATCC BAA-854 / 0140J), this protein is UPF0342 protein SUB0718.